Consider the following 227-residue polypeptide: Large ribosomal subunit protein uL3 (227 aa).

At glutamine 151 the chain carries N5-methylglutamine.

The protein belongs to the universal ribosomal protein uL3 family. In terms of assembly, part of the 50S ribosomal subunit. Forms a cluster with proteins L14 and L19. Methylated by PrmB.

Its function is as follows. One of the primary rRNA binding proteins, it binds directly near the 3'-end of the 23S rRNA, where it nucleates assembly of the 50S subunit. In Gluconobacter oxydans (strain 621H) (Gluconobacter suboxydans), this protein is Large ribosomal subunit protein uL3.